Consider the following 157-residue polypeptide: 6,7-dimethyl-8-ribityllumazine synthase (157 aa).

5-amino-6-(D-ribitylamino)uracil-binding positions include phenylalanine 22, alanine 56–glutamate 58, and alanine 80–valine 82. Glutamate 85–threonine 86 is a (2S)-2-hydroxy-3-oxobutyl phosphate binding site. Histidine 88 functions as the Proton donor in the catalytic mechanism. Phenylalanine 113 contacts 5-amino-6-(D-ribitylamino)uracil. Arginine 127 is a binding site for (2S)-2-hydroxy-3-oxobutyl phosphate.

This sequence belongs to the DMRL synthase family.

It carries out the reaction (2S)-2-hydroxy-3-oxobutyl phosphate + 5-amino-6-(D-ribitylamino)uracil = 6,7-dimethyl-8-(1-D-ribityl)lumazine + phosphate + 2 H2O + H(+). It participates in cofactor biosynthesis; riboflavin biosynthesis; riboflavin from 2-hydroxy-3-oxobutyl phosphate and 5-amino-6-(D-ribitylamino)uracil: step 1/2. In terms of biological role, catalyzes the formation of 6,7-dimethyl-8-ribityllumazine by condensation of 5-amino-6-(D-ribitylamino)uracil with 3,4-dihydroxy-2-butanone 4-phosphate. This is the penultimate step in the biosynthesis of riboflavin. The sequence is that of 6,7-dimethyl-8-ribityllumazine synthase from Levilactobacillus brevis (strain ATCC 367 / BCRC 12310 / CIP 105137 / JCM 1170 / LMG 11437 / NCIMB 947 / NCTC 947) (Lactobacillus brevis).